We begin with the raw amino-acid sequence, 98 residues long: U-scoloptoxin(16)-Er9a (98 aa).

An N-terminal signal peptide occupies residues 1-24; it reads MVSYLCMSVSSGWLSIGKIAIKDG.

Belongs to the scoloptoxin-16 family. Contains 4 disulfide bonds. Expressed by the venom gland.

The protein localises to the secreted. In Ethmostigmus rubripes (Giant centipede), this protein is U-scoloptoxin(16)-Er9a.